The chain runs to 525 residues: Light-independent protochlorophyllide reductase subunit B (525 aa).

A [4Fe-4S] cluster-binding site is contributed by Asp-36. Asp-292 acts as the Proton donor in catalysis. Position 428–429 (428–429 (GL)) interacts with substrate. The interval 447–470 (PSASSENGSAPLSAGTATPAAAPE) is disordered. The span at 460-470 (AGTATPAAAPE) shows a compositional bias: low complexity.

The protein belongs to the ChlB/BchB/BchZ family. Protochlorophyllide reductase is composed of three subunits; BchL, BchN and BchB. Forms a heterotetramer of two BchB and two BchN subunits. [4Fe-4S] cluster is required as a cofactor.

It carries out the reaction chlorophyllide a + oxidized 2[4Fe-4S]-[ferredoxin] + 2 ADP + 2 phosphate = protochlorophyllide a + reduced 2[4Fe-4S]-[ferredoxin] + 2 ATP + 2 H2O. It participates in porphyrin-containing compound metabolism; bacteriochlorophyll biosynthesis (light-independent). In terms of biological role, component of the dark-operative protochlorophyllide reductase (DPOR) that uses Mg-ATP and reduced ferredoxin to reduce ring D of protochlorophyllide (Pchlide) to form chlorophyllide a (Chlide). This reaction is light-independent. The NB-protein (BchN-BchB) is the catalytic component of the complex. This is Light-independent protochlorophyllide reductase subunit B from Chlorobium luteolum (strain DSM 273 / BCRC 81028 / 2530) (Pelodictyon luteolum).